The following is a 473-amino-acid chain: ATP synthase subunit beta (473 aa).

Position 158–165 (158–165 (GGAGVGKT)) interacts with ATP.

It belongs to the ATPase alpha/beta chains family. In terms of assembly, F-type ATPases have 2 components, CF(1) - the catalytic core - and CF(0) - the membrane proton channel. CF(1) has five subunits: alpha(3), beta(3), gamma(1), delta(1), epsilon(1). CF(0) has three main subunits: a(1), b(2) and c(9-12). The alpha and beta chains form an alternating ring which encloses part of the gamma chain. CF(1) is attached to CF(0) by a central stalk formed by the gamma and epsilon chains, while a peripheral stalk is formed by the delta and b chains.

The protein localises to the cell membrane. The enzyme catalyses ATP + H2O + 4 H(+)(in) = ADP + phosphate + 5 H(+)(out). Its function is as follows. Produces ATP from ADP in the presence of a proton gradient across the membrane. The catalytic sites are hosted primarily by the beta subunits. This chain is ATP synthase subunit beta, found in Bacillus caldotenax.